Consider the following 452-residue polypeptide: Pup--protein ligase (452 aa).

Glutamate 9 serves as a coordination point for Mg(2+). Position 53 (arginine 53) interacts with ATP. Tyrosine 55 is a binding site for Mg(2+). Aspartate 57 acts as the Proton acceptor in catalysis. Position 63 (glutamate 63) interacts with Mg(2+). ATP-binding residues include threonine 66 and tryptophan 419.

This sequence belongs to the Pup ligase/Pup deamidase family. Pup-conjugating enzyme subfamily.

The enzyme catalyses ATP + [prokaryotic ubiquitin-like protein]-L-glutamate + [protein]-L-lysine = ADP + phosphate + N(6)-([prokaryotic ubiquitin-like protein]-gamma-L-glutamyl)-[protein]-L-lysine.. Its pathway is protein degradation; proteasomal Pup-dependent pathway. It functions in the pathway protein modification; protein pupylation. Its function is as follows. Catalyzes the covalent attachment of the prokaryotic ubiquitin-like protein modifier Pup to the proteasomal substrate proteins, thereby targeting them for proteasomal degradation. This tagging system is termed pupylation. The ligation reaction involves the side-chain carboxylate of the C-terminal glutamate of Pup and the side-chain amino group of a substrate lysine. In Frankia alni (strain DSM 45986 / CECT 9034 / ACN14a), this protein is Pup--protein ligase.